We begin with the raw amino-acid sequence, 278 residues long: Rhomboid protease GlpG (278 aa).

A run of 6 helical transmembrane segments spans residues 95–115 (GPLTLGVMALCIVVYILMQIL), 143–163 (AFLHFSLLHITFNLLWWWYLG), 170–190 (LGSGKLFVLAVVSAFFSGWAQ), 192–212 (LFSGALFGGLSGVVYALMGYC), 224–241 (LMLPRGLMVFSVLWLVAG), and 245–267 (ILGMSIANAAHVAGLVLGLLMAF). Ser202 functions as the Nucleophile in the catalytic mechanism. Residue His255 is part of the active site.

Belongs to the peptidase S54 family.

The protein localises to the cell inner membrane. The catalysed reaction is Cleaves type-1 transmembrane domains using a catalytic dyad composed of serine and histidine that are contributed by different transmembrane domains.. Its function is as follows. Rhomboid-type serine protease that catalyzes intramembrane proteolysis. This Serratia proteamaculans (strain 568) protein is Rhomboid protease GlpG.